The primary structure comprises 474 residues: ATP-dependent rRNA helicase RRP3 (474 aa).

Over residues 1-10 (MPSMKRRKLS) the composition is skewed to basic residues. Residues 1-43 (MPSMKRRKLSHTPPQGEAEDGFSDSETSQASLQETPGNDEKIE) are disordered. Positions 24-36 (DSETSQASLQETP) are enriched in polar residues. The Q motif motif lies at 48 to 76 (KSFKDLGIIDSLCEACDSLGYKAPTQIQA). Residues 79 to 250 (IPLALQGRDL…RASLSNPLRV (172 aa)) form the Helicase ATP-binding domain. 92–99 (AETGSGKT) serves as a coordination point for ATP. Positions 198–201 (DEAD) match the DEAD box motif. A Helicase C-terminal domain is found at 278-422 (YLIYLLNEFP…EYKVEKEEVM (145 aa)). Residues 442 to 474 (LHENRGKKGATLRNRRIGKGAKRSRDEMDREEG) form a disordered region. The segment covering 448-463 (KKGATLRNRRIGKGAK) has biased composition (basic residues). A compositionally biased stretch (basic and acidic residues) spans 464–474 (RSRDEMDREEG).

Belongs to the DEAD box helicase family. DDX47/RRP3 subfamily. Interacts with the SSU processome.

The protein localises to the nucleus. It carries out the reaction ATP + H2O = ADP + phosphate + H(+). Functionally, ATP-dependent rRNA helicase required for pre-ribosomal RNA processing. Involved in the maturation of the 35S-pre-rRNA and to its cleavage to mature 18S rRNA. This Coccidioides immitis (strain RS) (Valley fever fungus) protein is ATP-dependent rRNA helicase RRP3.